We begin with the raw amino-acid sequence, 244 residues long: 3-oxoacyl-[acyl-carrier-protein] reductase FabG (244 aa).

Residues 12–15, threonine 37, 59–60, and asparagine 86 each bind NADP(+); these read GASR and NV. A substrate-binding site is contributed by serine 138. Catalysis depends on tyrosine 151, which acts as the Proton acceptor. Residues 151-155 and isoleucine 184 contribute to the NADP(+) site; that span reads YAAAK.

This sequence belongs to the short-chain dehydrogenases/reductases (SDR) family. In terms of assembly, homotetramer.

It carries out the reaction a (3R)-hydroxyacyl-[ACP] + NADP(+) = a 3-oxoacyl-[ACP] + NADPH + H(+). It participates in lipid metabolism; fatty acid biosynthesis. In terms of biological role, catalyzes the NADPH-dependent reduction of beta-ketoacyl-ACP substrates to beta-hydroxyacyl-ACP products, the first reductive step in the elongation cycle of fatty acid biosynthesis. The chain is 3-oxoacyl-[acyl-carrier-protein] reductase FabG (fabG) from Vibrio cholerae serotype O1 (strain ATCC 39315 / El Tor Inaba N16961).